The chain runs to 140 residues: ATP synthase epsilon chain (140 aa).

It belongs to the ATPase epsilon chain family. As to quaternary structure, F-type ATPases have 2 components, CF(1) - the catalytic core - and CF(0) - the membrane proton channel. CF(1) has five subunits: alpha(3), beta(3), gamma(1), delta(1), epsilon(1). CF(0) has three main subunits: a, b and c.

It is found in the cell inner membrane. Produces ATP from ADP in the presence of a proton gradient across the membrane. The polypeptide is ATP synthase epsilon chain (Xanthomonas campestris pv. campestris (strain 8004)).